We begin with the raw amino-acid sequence, 127 residues long: Large ribosomal subunit protein uL22 (127 aa).

As to quaternary structure, part of the 50S ribosomal subunit.

This protein binds specifically to 23S rRNA; its binding is stimulated by other ribosomal proteins, e.g. L4, L17, and L20. It is important during the early stages of 50S assembly. It makes multiple contacts with different domains of the 23S rRNA in the assembled 50S subunit and ribosome. Functionally, the globular domain of the protein is located near the polypeptide exit tunnel on the outside of the subunit, while an extended beta-hairpin is found that lines the wall of the exit tunnel in the center of the 70S ribosome. This chain is Large ribosomal subunit protein uL22, found in Rhodopseudomonas palustris (strain ATCC BAA-98 / CGA009).